The sequence spans 303 residues: Uracil phosphoribosyltransferase (303 aa).

Residues 1–86 (MHIIMKTILA…RYVSSTPTDS (86 aa)) are unknown. Residues 87–303 (LSSKPLAAVY…DRLCGTSNPS (217 aa)) are UPRTase. Residues Arg-170, Arg-195, and 222–230 (DPMLATGGS) each bind 5-phospho-alpha-D-ribose 1-diphosphate. Uracil is bound by residues Ile-285 and 290–292 (GDA). Asp-291 contacts 5-phospho-alpha-D-ribose 1-diphosphate.

This sequence belongs to the UPRTase family. Mg(2+) serves as cofactor.

It carries out the reaction UMP + diphosphate = 5-phospho-alpha-D-ribose 1-diphosphate + uracil. Its pathway is pyrimidine metabolism; UMP biosynthesis via salvage pathway; UMP from uracil: step 1/1. Its activity is regulated as follows. Allosterically activated by GTP. Its function is as follows. Catalyzes the conversion of uracil and 5-phospho-alpha-D-ribose 1-diphosphate (PRPP) to UMP and diphosphate. This chain is Uracil phosphoribosyltransferase (upp), found in Chlamydia muridarum (strain MoPn / Nigg).